Reading from the N-terminus, the 266-residue chain is 26 kDa endochitinase 2 (266 aa).

Residues 1-23 form the signal peptide; the sequence is MRSLAVVVAVVATVAMAIGTARG. 3 disulfides stabilise this stretch: C46–C108, C120–C128, and C227–C259. E90 acts as the Proton donor in catalysis.

This sequence belongs to the glycosyl hydrolase 19 family. Chitinase class II subfamily.

It catalyses the reaction Random endo-hydrolysis of N-acetyl-beta-D-glucosaminide (1-&gt;4)-beta-linkages in chitin and chitodextrins.. Functionally, defense against chitin-containing fungal pathogens. This chain is 26 kDa endochitinase 2, found in Hordeum vulgare (Barley).